A 178-amino-acid chain; its full sequence is Beta-lytic metalloendopeptidase (178 aa).

C65 and C111 are joined by a disulfide. Zn(2+) is bound by residues H120 and H122. Residues C155 and C168 are joined by a disulfide bond.

The protein belongs to the peptidase M23A family. Requires Zn(2+) as cofactor.

It carries out the reaction Cleavage of N-acetylmuramoyl-|-Ala, and of the insulin B chain at 23-Gly-|-Phe-24 &gt; 18-Val-|-Cys(SO3H).. This chain is Beta-lytic metalloendopeptidase, found in Lysobacter enzymogenes.